The following is a 252-amino-acid chain: Imidazole glycerol phosphate synthase subunit HisF (252 aa).

Active-site residues include Asp11 and Asp130.

It belongs to the HisA/HisF family. In terms of assembly, heterodimer of HisH and HisF.

The protein resides in the cytoplasm. The enzyme catalyses 5-[(5-phospho-1-deoxy-D-ribulos-1-ylimino)methylamino]-1-(5-phospho-beta-D-ribosyl)imidazole-4-carboxamide + L-glutamine = D-erythro-1-(imidazol-4-yl)glycerol 3-phosphate + 5-amino-1-(5-phospho-beta-D-ribosyl)imidazole-4-carboxamide + L-glutamate + H(+). It participates in amino-acid biosynthesis; L-histidine biosynthesis; L-histidine from 5-phospho-alpha-D-ribose 1-diphosphate: step 5/9. In terms of biological role, IGPS catalyzes the conversion of PRFAR and glutamine to IGP, AICAR and glutamate. The HisF subunit catalyzes the cyclization activity that produces IGP and AICAR from PRFAR using the ammonia provided by the HisH subunit. This is Imidazole glycerol phosphate synthase subunit HisF from Aromatoleum aromaticum (strain DSM 19018 / LMG 30748 / EbN1) (Azoarcus sp. (strain EbN1)).